A 638-amino-acid polypeptide reads, in one-letter code: MYKEKYFEELKKEFNSEDEIVTEIVNLEAILNLPKGTEYFISDIHGEYDGLNHILKTGAGIIREKINDCFPEMNETEKNELNFTVAYPKYALEKRQLEQDAEELTQWYFGMITRMIGLTQFCASKYSRSKVRKSLPPKYAYIIEELLYVEGSPKNKQKYYEQIISKIIELDRAQDLIQSLAGTIQKMVIDHIHIVGDVFDRGRKSNQVLELLEHAHSLDFQWGNHDVLWLGGYAGSQACIATLFRIATRYGYIYDLEREYGINLRALFTFATQHYQANPAFYPKAGDFDQNNLDLLSQVHQALTIIQFKLEGQVIKRQPEFQMDDRLFLDEVQQGKIQLGDQEYPLENGCFQMVDADHPYELTKEEQEVIDSLSYSFRHSPKIKVHVNFILEKGSMYLIYNNNLLYHGCIPLTEDGDFDQFEYHGQKYAGKDLLTFFERHIRAGAAKKTSDEDDDTDLMWYCWIGKKSPLFGRTAMTTFERYFIADSATHKEGDNPYFKLRDRLSTAHYILRKFGLDERNSYIINGHTPVKVSEGESPIKGGGQIIVIDGGLSKAYQKSTGIAGYTLINNSYGFQIVTHMPFQGIDDLYESQTQSTSLKRIIDRDLPRRNIADTTIGTELKRQVDDLKYLLETDEISH.

Belongs to the FBPase class 3 family. Requires Mn(2+) as cofactor.

It catalyses the reaction beta-D-fructose 1,6-bisphosphate + H2O = beta-D-fructose 6-phosphate + phosphate. It functions in the pathway carbohydrate biosynthesis; gluconeogenesis. The chain is Fructose-1,6-bisphosphatase class 3 from Pediococcus pentosaceus (strain ATCC 25745 / CCUG 21536 / LMG 10740 / 183-1w).